The sequence spans 252 residues: Uracil-DNA glycosylase (252 aa).

Catalysis depends on aspartate 78, which acts as the Proton acceptor.

Belongs to the uracil-DNA glycosylase (UDG) superfamily. UNG family.

The protein resides in the cytoplasm. It catalyses the reaction Hydrolyzes single-stranded DNA or mismatched double-stranded DNA and polynucleotides, releasing free uracil.. In terms of biological role, excises uracil residues from the DNA which can arise as a result of misincorporation of dUMP residues by DNA polymerase or due to deamination of cytosine. This chain is Uracil-DNA glycosylase, found in Bordetella avium (strain 197N).